Consider the following 877-residue polypeptide: Alanine--tRNA ligase (877 aa).

The Zn(2+) site is built by histidine 565, histidine 569, cysteine 667, and histidine 671.

Belongs to the class-II aminoacyl-tRNA synthetase family. Requires Zn(2+) as cofactor.

The protein localises to the cytoplasm. It carries out the reaction tRNA(Ala) + L-alanine + ATP = L-alanyl-tRNA(Ala) + AMP + diphosphate. Its function is as follows. Catalyzes the attachment of alanine to tRNA(Ala) in a two-step reaction: alanine is first activated by ATP to form Ala-AMP and then transferred to the acceptor end of tRNA(Ala). Also edits incorrectly charged Ser-tRNA(Ala) and Gly-tRNA(Ala) via its editing domain. This Acidithiobacillus ferridurans protein is Alanine--tRNA ligase.